The primary structure comprises 355 residues: MGKCSYRFISLQTLTPNSLLDHSPNPTIWAKPLQIGSLTLHSRVLQSPLSGVTDLVFRRLVRRYAPQAMLYTEMVSATEIHHLRTLPQVMEIDPRENPISIQLFDCRPDFMAEAAQKAVAQGAQSVDINMGCPVNKITKKGGGSSLLRQPAVAEAIVKTVVAAVDVPVTVKTRLGWDDGEINIVEFAQRLQDAGAQMLTLHGRTRAQGYNGRARWQWIAKVKQALTIPVIANGDIFSVEAAIACLEETGADGVMCSRGSLGYPFLVGEIEHFFKTGEKRKAPTVAEKLTCAQEHLQMLWEYKGQRGLFQARKHLAWYCKDFPGAAALREQLFQINSVQEGKDLLDQAISTAKLCL.

Residues 48–50 (PLS) and glutamine 102 each bind FMN. The active-site Proton donor is the cysteine 132. FMN-binding positions include lysine 171, 232 to 234 (NGD), and 256 to 257 (SR).

Belongs to the Dus family. Requires FMN as cofactor.

The catalysed reaction is a 5,6-dihydrouridine in tRNA + NAD(+) = a uridine in tRNA + NADH + H(+). The enzyme catalyses a 5,6-dihydrouridine in tRNA + NADP(+) = a uridine in tRNA + NADPH + H(+). Catalyzes the synthesis of 5,6-dihydrouridine (D), a modified base found in the D-loop of most tRNAs, via the reduction of the C5-C6 double bond in target uridines. This chain is Probable tRNA-dihydrouridine synthase 1 (dus1), found in Synechocystis sp. (strain ATCC 27184 / PCC 6803 / Kazusa).